A 132-amino-acid polypeptide reads, in one-letter code: Small ribosomal subunit protein uS9 (132 aa).

It belongs to the universal ribosomal protein uS9 family.

The polypeptide is Small ribosomal subunit protein uS9 (rps9) (Halobacterium salinarum (strain ATCC 700922 / JCM 11081 / NRC-1) (Halobacterium halobium)).